Consider the following 247-residue polypeptide: Isoprenyl transferase (247 aa).

The active site involves Asp-18. Asp-18 contributes to the Mg(2+) binding site. Substrate contacts are provided by residues 19-22 (GNGR), Trp-23, Arg-31, His-35, and 63-65 (SSE). Residue Asn-66 is the Proton acceptor of the active site. Substrate is bound by residues Trp-67, Arg-69, Arg-186, and 192 to 194 (RLS). Residue Glu-205 coordinates Mg(2+).

The protein belongs to the UPP synthase family. Homodimer. Mg(2+) is required as a cofactor.

Functionally, catalyzes the condensation of isopentenyl diphosphate (IPP) with allylic pyrophosphates generating different type of terpenoids. This chain is Isoprenyl transferase, found in Agrobacterium fabrum (strain C58 / ATCC 33970) (Agrobacterium tumefaciens (strain C58)).